The following is a 238-amino-acid chain: Tritrans,polycis-undecaprenyl-diphosphate synthase (geranylgeranyl-diphosphate specific) (238 aa).

Asp-18 is an active-site residue. Residue Asp-18 coordinates Mg(2+). Residues 19–22 (GNRR) and 64–66 (STE) contribute to the substrate site. The Proton acceptor role is filled by Asn-67. Residues Arg-70, Arg-187, and 193–195 (RLS) contribute to the substrate site. Glu-206 contacts Mg(2+).

It belongs to the UPP synthase family. Homodimer. Requires Mg(2+) as cofactor.

It carries out the reaction geranylgeranyl diphosphate + 7 isopentenyl diphosphate = tri-trans,hepta-cis-undecaprenyl diphosphate + 7 diphosphate. Functionally, catalyzes the sequential condensation of isopentenyl diphosphate (IPP) with geranylgeranyl diphosphate (GGPP) to yield (2Z,6Z,10Z,14Z,18Z,22Z,26Z,30E,34E,38E)-undecaprenyl diphosphate (tritrans,heptacis-UPP). It is probably the precursor of glycosyl carrier lipids. This chain is Tritrans,polycis-undecaprenyl-diphosphate synthase (geranylgeranyl-diphosphate specific), found in Pyrobaculum aerophilum (strain ATCC 51768 / DSM 7523 / JCM 9630 / CIP 104966 / NBRC 100827 / IM2).